A 159-amino-acid polypeptide reads, in one-letter code: Transcriptional repressor NrdR (159 aa).

The segment at 3 to 34 (CPFCRHEDTQVVDSRVSEDGAAIRRRRRCSAC) is a zinc-finger region. Residues 49–139 (PAVVKKDGSR…VYRRFEDVSE (91 aa)) form the ATP-cone domain.

This sequence belongs to the NrdR family. The cofactor is Zn(2+).

Negatively regulates transcription of bacterial ribonucleotide reductase nrd genes and operons by binding to NrdR-boxes. This chain is Transcriptional repressor NrdR, found in Burkholderia vietnamiensis (strain G4 / LMG 22486) (Burkholderia cepacia (strain R1808)).